The chain runs to 549 residues: Chaperonin GroEL (549 aa).

ATP contacts are provided by residues 30 to 33 (TLGP), lysine 51, 87 to 91 (DGTTT), glycine 415, 479 to 481 (NAA), and aspartate 495.

This sequence belongs to the chaperonin (HSP60) family. Forms a cylinder of 14 subunits composed of two heptameric rings stacked back-to-back. Interacts with the co-chaperonin GroES.

The protein resides in the cytoplasm. The enzyme catalyses ATP + H2O + a folded polypeptide = ADP + phosphate + an unfolded polypeptide.. Functionally, together with its co-chaperonin GroES, plays an essential role in assisting protein folding. The GroEL-GroES system forms a nano-cage that allows encapsulation of the non-native substrate proteins and provides a physical environment optimized to promote and accelerate protein folding. The chain is Chaperonin GroEL from Leptothrix cholodnii (strain ATCC 51168 / LMG 8142 / SP-6) (Leptothrix discophora (strain SP-6)).